The primary structure comprises 1489 residues: DNA-directed RNA polymerase subunit beta (1489 aa).

This sequence belongs to the RNA polymerase beta chain family. The RNAP catalytic core consists of 2 alpha, 1 beta, 1 beta' and 1 omega subunit. When a sigma factor is associated with the core the holoenzyme is formed, which can initiate transcription.

It carries out the reaction RNA(n) + a ribonucleoside 5'-triphosphate = RNA(n+1) + diphosphate. DNA-dependent RNA polymerase catalyzes the transcription of DNA into RNA using the four ribonucleoside triphosphates as substrates. The protein is DNA-directed RNA polymerase subunit beta of Koribacter versatilis (strain Ellin345).